The primary structure comprises 118 residues: Probable FK506-binding protein (118 aa).

The 86-residue stretch at 33–118 folds into the PPIase FKBP-type domain; the sequence is GGEVEVHYVG…LVFIIDLISA (86 aa).

The protein belongs to the FKBP-type PPIase family.

The enzyme catalyses [protein]-peptidylproline (omega=180) = [protein]-peptidylproline (omega=0). Its function is as follows. PPIases accelerate the folding of proteins. The polypeptide is Probable FK506-binding protein (Corynebacterium glutamicum (strain ATCC 13032 / DSM 20300 / JCM 1318 / BCRC 11384 / CCUG 27702 / LMG 3730 / NBRC 12168 / NCIMB 10025 / NRRL B-2784 / 534)).